A 348-amino-acid chain; its full sequence is Ion-translocating oxidoreductase complex subunit D (348 aa).

A run of 5 helical transmembrane segments spans residues 19 to 39 (FMLWVIVAMLPALIVQIAFFG), 41 to 61 (GVVIQLAIALSMAIVIEIVVA), 66 to 86 (KSTTFYLADLAGVVTATILAM), 87 to 107 (AIPPYAPYWVVMIGMIVALLL), and 122 to 142 (PAMVAYAFLLISFPVQMTSWL). Threonine 186 is modified (FMN phosphoryl threonine). A run of 5 helical transmembrane segments spans residues 212–232 (IFARGWLQLNLAFLAGGLFLL), 236–256 (IIHWQIPVAMLVVFSVLSALT), 265–285 (LNVLSQLFSGAMMFGAFFIAT), 291–311 (SITPKGKLIFGGLIGLLAYLI), and 315–335 (GSYPDAIAFAVLLANLCVPLI).

The protein belongs to the NqrB/RnfD family. As to quaternary structure, the complex is composed of six subunits: RnfA, RnfB, RnfC, RnfD, RnfE and RnfG. Requires FMN as cofactor.

The protein resides in the cell inner membrane. In terms of biological role, part of a membrane-bound complex that couples electron transfer with translocation of ions across the membrane. In Haemophilus ducreyi (strain 35000HP / ATCC 700724), this protein is Ion-translocating oxidoreductase complex subunit D.